The chain runs to 529 residues: Bifunctional purine biosynthesis protein PurH (529 aa).

One can recognise an MGS-like domain in the interval 1–148 (MEQSFLPIRC…KNYKYVTVVV (148 aa)).

It belongs to the PurH family.

It carries out the reaction (6R)-10-formyltetrahydrofolate + 5-amino-1-(5-phospho-beta-D-ribosyl)imidazole-4-carboxamide = 5-formamido-1-(5-phospho-D-ribosyl)imidazole-4-carboxamide + (6S)-5,6,7,8-tetrahydrofolate. The enzyme catalyses IMP + H2O = 5-formamido-1-(5-phospho-D-ribosyl)imidazole-4-carboxamide. It functions in the pathway purine metabolism; IMP biosynthesis via de novo pathway; 5-formamido-1-(5-phospho-D-ribosyl)imidazole-4-carboxamide from 5-amino-1-(5-phospho-D-ribosyl)imidazole-4-carboxamide (10-formyl THF route): step 1/1. It participates in purine metabolism; IMP biosynthesis via de novo pathway; IMP from 5-formamido-1-(5-phospho-D-ribosyl)imidazole-4-carboxamide: step 1/1. The polypeptide is Bifunctional purine biosynthesis protein PurH (Wigglesworthia glossinidia brevipalpis).